Reading from the N-terminus, the 517-residue chain is MLALLLSPYGAYLGLALLVLYYLLPYLKRAHLRDIPAPGLAAFTNFWLLLQTRRGHRFVVVDNAHKKYGKLVRIAPRHTSIADDGAIQAVYGHGNGFLKSDFYDAFVSIHRGLFNTRDRAEHTRKRKTVSHTFSMKSIGQFEQYIHGNIELFVKQWNRMADTQRNPKTGFASLDALNWFNYLAFDIIGDLAFGAPFGMLDKGKDFAEMRKTPDSPPSYVQAVEVLNRRGEVSATLGCYPALKPFAKYLPDSFFRDGIQAVEDLAGIAVARVNERLRPEVMANNTRVDLLARLMEGKDSNGEKLGRAELTAEALTQLIAGSDTTSNTSCAILYWCMRTPGVIEKLHKVLDEAIPQDVDVPTHAMVKDIPYLQWVIWETMRIHSTSAMGLPREIPAGNPPVTISGHTFYPGDVVSVPSYTIHRSKEIWGPDAEQFVPERWDPARLTPRQKAAFIPFSTGPRACVGRNVAEMELLVICGTVFRLFEFEMQQEGPMETREGFLRKPLGLQVGMKRRQPGSA.

Residues 4–24 (LLLSPYGAYLGLALLVLYYLL) form a helical membrane-spanning segment. N-linked (GlcNAc...) asparagine glycosylation is found at asparagine 282 and asparagine 325. Cysteine 461 serves as a coordination point for heme.

The protein belongs to the cytochrome P450 family. Heme is required as a cofactor.

It is found in the membrane. It catalyses the reaction benzoate + reduced [NADPH--hemoprotein reductase] + O2 = 4-hydroxybenzoate + oxidized [NADPH--hemoprotein reductase] + H2O + H(+). In terms of biological role, cytochrome P450 monooxygenase; part of the benzoic acid degradation pathway also known as the protocatechuic acid pathway. Benzoic acid debradation begins with the conversion of benzoic acid into 4-hydroxybenzoic acid through hydroxylation by the benzoate-4-monooxygenase bphA, and its partner NADPH-cytochrome P450 reductase cprA which act as a mediator in electron donation from NADPH. 4-Hydroxybenzoic acid is then converted into 3,4-dihydroxybenzoic acid (also called protocatechuic acid) by the p-hydroxybenzoate-m-hydroxylase phhA. Protocatechuic acid is converted into 3-carboxy-cis,cis-muconic acid by the intradiol ring-cleavage dioxygenase prcA, which is further metabolized through the 3-oxoadipate pathway to finally enter the tricarboxylic acid cycle (TCA). This Aspergillus niger (strain ATCC MYA-4892 / CBS 513.88 / FGSC A1513) protein is Benzoate 4-monooxygenase bphA.